We begin with the raw amino-acid sequence, 1444 residues long: RNA-directed RNA polymerase P1 (1444 aa).

The disordered stretch occupies residues 156–182 (SEEIQMDESQSDKRRRKKRMEKSRPVW). The RdRp catalytic domain occupies 690-897 (LGVGFATLYQ…KTVISHISGE (208 aa)).

The protein belongs to the reoviridae RNA-directed RNA polymerase family.

The protein resides in the virion. It is found in the host cytoplasm. The catalysed reaction is RNA(n) + a ribonucleoside 5'-triphosphate = RNA(n+1) + diphosphate. Its function is as follows. RNA-directed RNA polymerase that is involved in both transcription and genome replication. Together with the capping enzyme P5 and protein P7, forms an enzyme complex positioned near the channels situated at each of the five-fold vertices of the core. This chain is RNA-directed RNA polymerase P1 (S1), found in Rice dwarf virus (isolate Fujian) (RDV).